The chain runs to 220 residues: Adenylate kinase (220 aa).

10–15 (GAGKGT) lines the ATP pocket. The segment at 30–59 (STGDMLRAAVKAGTPLGVEAKGYMDAGKLV) is NMP. Residues threonine 31, arginine 36, 57-59 (KLV), 85-88 (GFPR), and glutamine 92 contribute to the AMP site. The tract at residues 122-159 (GRRTHPASGRTYHVKFNPPKVEGHDDVTGEPLIQRDDD) is LID. Residues arginine 123 and 132–133 (TY) contribute to the ATP site. 2 residues coordinate AMP: arginine 156 and arginine 167. ATP is bound at residue glycine 206.

This sequence belongs to the adenylate kinase family. In terms of assembly, monomer.

The protein resides in the cytoplasm. It carries out the reaction AMP + ATP = 2 ADP. It functions in the pathway purine metabolism; AMP biosynthesis via salvage pathway; AMP from ADP: step 1/1. Its function is as follows. Catalyzes the reversible transfer of the terminal phosphate group between ATP and AMP. Plays an important role in cellular energy homeostasis and in adenine nucleotide metabolism. The protein is Adenylate kinase of Burkholderia cenocepacia (strain HI2424).